The following is a 284-amino-acid chain: Short-chain dehydrogenase RED1 (284 aa).

NADP(+) is bound by residues Ile11, Thr37, Asp58, Asn86, Tyr151, Lys155, Val184, and Thr186. Residue Tyr151 is the Proton acceptor of the active site. Lys155 serves as the catalytic Lowers pKa of active site Tyr.

This sequence belongs to the short-chain dehydrogenases/reductases (SDR) family.

The protein operates within polyketide biosynthesis. Functionally, short-chain dehydrogenase; part of the gene cluster that mediates the biosynthesis of pyriculol and pyriculariol, two heptaketides that induce lesion formation upon application on rice leaves but are dispensable for pathogenicity. The highly reducing polyketide synthase synthesizes the heptaketide backbone of pyriculol and pyriculariol. Pyriculol and pyriculariol contain several hydroxyl moieties and double bonds, so it can be assumed that several reduction steps occur during biosynthesis. These reactions could be executed by PKS19 itself or partly by the tailoring enzymes OXR1, OXR2, RED1, RED2 or RED3, identified within the cluster. The FAD-linked oxidoreductase OXR1 is the only tailoring enzyme for which the function has been determined yet, and is involved in the oxidation of dihydropyriculol and dihydropyriculariol into pyriculol and pyriculariol, respectively. This chain is Short-chain dehydrogenase RED1, found in Pyricularia oryzae (strain 70-15 / ATCC MYA-4617 / FGSC 8958) (Rice blast fungus).